A 505-amino-acid polypeptide reads, in one-letter code: Histidine ammonia-lyase (505 aa).

A cross-link (5-imidazolinone (Ala-Gly)) is located at residues 141-143 (ASG). Residue Ser142 is modified to 2,3-didehydroalanine (Ser).

The protein belongs to the PAL/histidase family. In terms of processing, contains an active site 4-methylidene-imidazol-5-one (MIO), which is formed autocatalytically by cyclization and dehydration of residues Ala-Ser-Gly.

The protein localises to the cytoplasm. The catalysed reaction is L-histidine = trans-urocanate + NH4(+). It participates in amino-acid degradation; L-histidine degradation into L-glutamate; N-formimidoyl-L-glutamate from L-histidine: step 1/3. The protein is Histidine ammonia-lyase of Bacillus mycoides (strain KBAB4) (Bacillus weihenstephanensis).